The sequence spans 152 residues: Deoxyuridine 5'-triphosphate nucleotidohydrolase (152 aa).

Residues 71 to 73 (RSG), Asn-84, 88 to 90 (LID), and Met-98 each bind substrate.

This sequence belongs to the dUTPase family. Requires Mg(2+) as cofactor.

The enzyme catalyses dUTP + H2O = dUMP + diphosphate + H(+). Its pathway is pyrimidine metabolism; dUMP biosynthesis; dUMP from dCTP (dUTP route): step 2/2. Its function is as follows. This enzyme is involved in nucleotide metabolism: it produces dUMP, the immediate precursor of thymidine nucleotides and it decreases the intracellular concentration of dUTP so that uracil cannot be incorporated into DNA. This is Deoxyuridine 5'-triphosphate nucleotidohydrolase from Photorhabdus laumondii subsp. laumondii (strain DSM 15139 / CIP 105565 / TT01) (Photorhabdus luminescens subsp. laumondii).